The following is a 147-amino-acid chain: Large ribosomal subunit protein uL22 (147 aa).

Belongs to the universal ribosomal protein uL22 family. In terms of assembly, part of the 50S ribosomal subunit.

In terms of biological role, this protein binds specifically to 23S rRNA; its binding is stimulated by other ribosomal proteins, e.g. L4, L17, and L20. It is important during the early stages of 50S assembly. It makes multiple contacts with different domains of the 23S rRNA in the assembled 50S subunit and ribosome. Its function is as follows. The globular domain of the protein is located near the polypeptide exit tunnel on the outside of the subunit, while an extended beta-hairpin is found that lines the wall of the exit tunnel in the center of the 70S ribosome. The chain is Large ribosomal subunit protein uL22 from Fervidobacterium nodosum (strain ATCC 35602 / DSM 5306 / Rt17-B1).